A 589-amino-acid chain; its full sequence is Zinc finger protein 131 (589 aa).

One can recognise a BTB domain in the interval 34-98 (TDITLIVDGH…TYTAKLMIQG (65 aa)). The short motif at 137 to 148 (TGKNEAKKRKIA) is the Nuclear localization signal 1 element. Positions 224–234 (GDRKGQIKEDG) are enriched in basic and acidic residues. The tract at residues 224–247 (GDRKGQIKEDGCPSDPTSKQEHMK) is disordered. C2H2-type zinc fingers lie at residues 254 to 277 (FKCE…NCYH) and 294 to 316 (HVCQ…LRKH). Residues lysine 255 and lysine 261 each participate in a glycyl lysine isopeptide (Lys-Gly) (interchain with G-Cter in SUMO2) cross-link. The Nuclear localization signal 2 motif lies at 283-294 (VSKKQRTGKKIH). Residues 322–347 (FECPNCHERFARNSTLKCHLTACQTG) form a C2H2-type 3; degenerate zinc finger. C2H2-type zinc fingers lie at residues 358-380 (YECQ…LVIH) and 386-409 (NHCT…SDAH). Basic and acidic residues predominate over residues 539 to 583 (NQEERESSQADAAEAAREDHEDAEDLETKPTVDSEAEKAENEDRT). Positions 539 to 589 (NQEERESSQADAAEAAREDHEDAEDLETKPTVDSEAEKAENEDRTAMPVLE) are disordered. Residue lysine 567 forms a Glycyl lysine isopeptide (Lys-Gly) (interchain with G-Cter in SUMO) linkage.

It belongs to the krueppel C2H2-type zinc-finger protein family. Monosumoylated at Lys-567 by CBX4 and UHRF2. Sumoylation may potentiate ZNF131 inhibition of estrogen signaling. Sumoylation does not interfere with ubiquitination. Post-translationally, ubiquitinated.

The protein localises to the nucleus. May be involved in transcriptional regulation as a repressor of ESR1/ER-alpha signaling. Plays a role during development and organogenesis as well as in the function of the adult central nervous system. In Pongo abelii (Sumatran orangutan), this protein is Zinc finger protein 131 (ZNF131).